The primary structure comprises 78 residues: Large ribosomal subunit protein bL28 (78 aa).

The protein belongs to the bacterial ribosomal protein bL28 family.

The polypeptide is Large ribosomal subunit protein bL28 (Synechococcus sp. (strain WH7803)).